A 130-amino-acid chain; its full sequence is Cysteine methyltransferase (130 aa).

It carries out the reaction [trehalose-6-phosphate synthase]-L-cysteine + S-adenosyl-L-methionine = [trehalose-6-phosphate synthase]-S-methyl-L-cysteine + S-adenosyl-L-homocysteine + H(+). In terms of biological role, S-adenosyl-L-methionine-dependent protein-cysteine S-methyltransferase with broad substrate specificity. Methylates trehalose-6-phosphate synthase (TPS), enhancing its enzymatic activity and promoting trehalose synthesis upon entry of cells into stationary phase. This chain is Cysteine methyltransferase, found in Saccharomyces cerevisiae (Baker's yeast).